The primary structure comprises 20 residues: 26 kDa protein (20 aa).

The protein is 26 kDa protein of Bacillus cereus.